The chain runs to 39 residues: Photosystem II reaction center protein J (39 aa).

A helical membrane pass occupies residues 9–29; the sequence is LWLVATVGGIAAITVLGIFIY.

The protein belongs to the PsbJ family. In terms of assembly, PSII is composed of 1 copy each of membrane proteins PsbA, PsbB, PsbC, PsbD, PsbE, PsbF, PsbH, PsbI, PsbJ, PsbK, PsbL, PsbM, PsbT, PsbX, PsbY, PsbZ, Psb30/Ycf12, at least 3 peripheral proteins of the oxygen-evolving complex and a large number of cofactors. It forms dimeric complexes.

The protein localises to the plastid. It is found in the chloroplast thylakoid membrane. Its function is as follows. One of the components of the core complex of photosystem II (PSII). PSII is a light-driven water:plastoquinone oxidoreductase that uses light energy to abstract electrons from H(2)O, generating O(2) and a proton gradient subsequently used for ATP formation. It consists of a core antenna complex that captures photons, and an electron transfer chain that converts photonic excitation into a charge separation. The protein is Photosystem II reaction center protein J of Pyropia yezoensis (Susabi-nori).